The primary structure comprises 512 residues: Maturase K (512 aa).

The protein belongs to the intron maturase 2 family. MatK subfamily.

It is found in the plastid. Its subcellular location is the chloroplast. Functionally, usually encoded in the trnK tRNA gene intron. Probably assists in splicing its own and other chloroplast group II introns. The protein is Maturase K of Amorphophallus titanum (Titan arum).